A 271-amino-acid chain; its full sequence is MVVAKKSLGQHFLTDESFLDRIVSALPPLNSLRLIEIGVGLGDLTLKLLDRYPLKTYEIDSSLCEKMRERLKKQKKPFELELAEKDALFLKEEEPYFLISNLPYYIATRLVLNAFKDPKCRGLLVMTQKEVALKFCTKDSQNALSVLAHAIGNVTLLFDVPPSAFSPSPKVFSSMFEVIKEPLKEKALASLIPTLSFEEALQKGFETLEDFLKACFSSPRKTLSNNLKKSVSYKEKLDKVLDFLALENQPTSVRASEIQDYLKLLKYLLKG.

S-adenosyl-L-methionine is bound by residues His11, Leu13, Gly38, Glu58, Asp86, and Asn101.

It belongs to the class I-like SAM-binding methyltransferase superfamily. rRNA adenine N(6)-methyltransferase family. RsmA subfamily.

The protein localises to the cytoplasm. The catalysed reaction is adenosine(1518)/adenosine(1519) in 16S rRNA + 4 S-adenosyl-L-methionine = N(6)-dimethyladenosine(1518)/N(6)-dimethyladenosine(1519) in 16S rRNA + 4 S-adenosyl-L-homocysteine + 4 H(+). Specifically dimethylates two adjacent adenosines (A1518 and A1519) in the loop of a conserved hairpin near the 3'-end of 16S rRNA in the 30S particle. May play a critical role in biogenesis of 30S subunits. The chain is Ribosomal RNA small subunit methyltransferase A from Helicobacter acinonychis (strain Sheeba).